We begin with the raw amino-acid sequence, 416 residues long: Gamma-glutamyl phosphate reductase (416 aa).

This sequence belongs to the gamma-glutamyl phosphate reductase family.

Its subcellular location is the cytoplasm. The enzyme catalyses L-glutamate 5-semialdehyde + phosphate + NADP(+) = L-glutamyl 5-phosphate + NADPH + H(+). It functions in the pathway amino-acid biosynthesis; L-proline biosynthesis; L-glutamate 5-semialdehyde from L-glutamate: step 2/2. Functionally, catalyzes the NADPH-dependent reduction of L-glutamate 5-phosphate into L-glutamate 5-semialdehyde and phosphate. The product spontaneously undergoes cyclization to form 1-pyrroline-5-carboxylate. The chain is Gamma-glutamyl phosphate reductase from Salmonella heidelberg (strain SL476).